The following is a 409-amino-acid chain: NDP-glycosyltransferase ltbB (409 aa).

An N-linked (GlcNAc...) asparagine glycan is attached at asparagine 36. A helical membrane pass occupies residues isoleucine 319–alanine 339.

The protein belongs to the GT2 glycosyltransferase family.

Its subcellular location is the membrane. It participates in secondary metabolite biosynthesis. In terms of biological role, NDP-glycosyltransferase; part of the gene cluster that mediates the biosynthesis of luteodienoside A, a glycosylated polyketide consisting of an unusual 1-O-beta-D-glucopyranosyl-myo-inositol (glucinol) ester of 3-hydroxy-2,2,4-trimethylocta-4,6-dienoic acid. LtbB likely serves as a glucinol synthase by transferring D-glucose to myo-inositol using NDP-glucose as a substrate. The ltbA carnitine O-acyltransferase (cAT) domain uses glucinol produced by the glycosyltransferase ltbB as an offloading substrate to release luteodienoside A from the HR-PKS. Since ltbA and ltbB are sufficient for the biosynthesis of luteodienoside A, the functions of the methyltransferase ltbC and the FAD-binding monooxygenase ltbD within the pathway remain obscur. This Aspergillus luteorubrus protein is NDP-glycosyltransferase ltbB.